A 1378-amino-acid chain; its full sequence is MDTNWLYVLLQKSTADPLERLKLGNVILNEVSQRKVSPHPKLVNDFLDVMSGWLTGSNFKVSTIGLEILDAALRTSPDVLASYYFDRCSVLIERMGDAKVQVREMAINLCLQLAYLENSSPVMLLDRLCVPGTGFQHKQWLVKVGSLNILREFLSSSFALVIQQAITLIPQLCRLTNDPNSEVRDVSTQCLIDLMVYGGKPIVAKIAATRLINEQKMATLLQRYQTTVATRGDLPPKHTITMETTPAQPSRNSLLRRSLRSPAKIIHPSASTTSFTSSARLSTPPRPTTTAAQSLSLAPQTPSPLSLPSPSGGQMSRSRDLTRSSLRAPAGISISRYRSSSCAPAAQCAITLDDFKKSFTAVPKTTIYSNHDIREKLELANLVLRNANEDWSKRANQLKLIRSIIINCDENIDRSLLISIINELADALEFSIRDLRSQIVREAAVTCSFLFETFGMEVKNVAECVLPAALAQVAVSTKVIASSAATLTVFIVQKIQTRQIFTTLSELSSSKAKEQRRQLAVVLETLIASWDLKSKQPILKQIAQLVQNAICDADGETRVAGRKAFAKLEQLHGTTADLIFRELDPAKQKMLRDGVSSSSSSLNSDRDNNNQKQQPNQQNISQKFLSQRSASAVDKSIQLSVKPQTTAIPSRPTAMPMNNRLPKSSTSTSFSAVRSSGYGQNQSTTPNRAKTPSDGFAGSSPHYTNGNNNNKSSSSSPSTSTHQTPIQRVASNLGSSSFVASLTQEQANCLQNAMNTAKDEMSKNNEDDEFLLDEIRKTPPKEVPRSYNNSPFKPSNLDSSVHRSYNNNSPFRPSSGSVGSGSNGSVQSIEHILKACTSSSLNEKRDAIVNLNQVITDPNLCQLECKNIGDTLSRLLAEGNNTLIISILDTISIFIKFQYKKLDNWLKLALGKLFAKMGADALPNVKSALSSTQKMFLTTFDPTFQLKAVCDFMCDPVHLLSPKSRLALLEYICLLFEEIWPEDPRCLERQTHLDTPYTRAAIRKMFAWMFDPRIGAILMPACERLVCALFALNAADFTMIFGELPSECRDWAYRILQLNGQQNNQKPIEKEKERFISNNNYKPCPLDNEEIEKPIMKTTYSTYESTRKEYSQTERIATENQYSTPPPPDYRTSTAHLAKNHVDQAAYIRNQLDAIRDFEKADKLNEAMANLHGMMCEGSFTLWNQFFDELLDSIYQILSTFSQSIRKKLALRILQKMCTAQATKLFDSTEIAISKVLQCACTSDDNTMGVAAEDCLRILASHLPLTRVVLISRRILSQDDDDQRGVLILKMLTRMFQDIDIEELHLIVNDVAPCFVTAYESMSSTVRKCAVFGLVALVQRVGMQRMEPHLRTLNASKLNLIDLYVGRAKSSESGASSN.

One copy of the HEAT 1 repeat lies at 168 to 206 (LIPQLCRLTNDPNSEVRDVSTQCLIDLMVYGGKPIVAKI). 3 disordered regions span residues 231–254 (RGDL…RNSL), 266–325 (IHPS…TRSS), and 590–725 (MLRD…HQTP). Composition is skewed to low complexity over residues 269–283 (SAST…RLST) and 610–619 (NQKQQPNQQN). Composition is skewed to polar residues over residues 620-630 (ISQKFLSQRSA) and 637-648 (IQLSVKPQTTAI). The segment covering 664–676 (SSTSTSFSAVRSS) has biased composition (low complexity). Positions 677–690 (GYGQNQSTTPNRAK) are enriched in polar residues. Residues 704–721 (TNGNNNNKSSSSSPSTST) are compositionally biased toward low complexity. A coiled-coil region spans residues 740 to 767 (ASLTQEQANCLQNAMNTAKDEMSKNNED). Residues 775 to 784 (IRKTPPKEVP) show a composition bias toward basic and acidic residues. The interval 775-823 (IRKTPPKEVPRSYNNSPFKPSNLDSSVHRSYNNNSPFRPSSGSVGSGSN) is disordered. Residues 786-812 (SYNNSPFKPSNLDSSVHRSYNNNSPFR) show a composition bias toward polar residues. An HEAT 2 repeat occupies 1305 to 1341 (HLIVNDVAPCFVTAYESMSSTVRKCAVFGLVALVQRV).

This sequence belongs to the CLASP family.

The protein localises to the cytoplasm. Its subcellular location is the cytoskeleton. Functionally, microtubule plus-end tracking protein that promotes the stabilization of dynamic microtubules. Operates redundantly with cls-2 and cls-3 in regulating microtubule processes which position the spindle during asymmetric cell division. In Caenorhabditis elegans, this protein is Protein CLASP-1 (cls-1).